The chain runs to 89 residues: MYLDSAKKQELFEKYGKSATNTGSAESQIALFTFRISHLTEHLKVNHKDYATERSLKMLVGKRRRLLDYLIKTDIERYRAIIKELGIRK.

It belongs to the universal ribosomal protein uS15 family. Part of the 30S ribosomal subunit. Forms a bridge to the 50S subunit in the 70S ribosome, contacting the 23S rRNA.

Functionally, one of the primary rRNA binding proteins, it binds directly to 16S rRNA where it helps nucleate assembly of the platform of the 30S subunit by binding and bridging several RNA helices of the 16S rRNA. Its function is as follows. Forms an intersubunit bridge (bridge B4) with the 23S rRNA of the 50S subunit in the ribosome. This Parabacteroides distasonis (strain ATCC 8503 / DSM 20701 / CIP 104284 / JCM 5825 / NCTC 11152) protein is Small ribosomal subunit protein uS15.